Here is a 968-residue protein sequence, read N- to C-terminus: Alanine--tRNA ligase, cytoplasmic (968 aa).

At M1 the chain carries N-acetylmethionine. A phosphoserine mark is found at S3 and S8. Residue K19 is modified to N6-acetyllysine. Residues R77, H95, W176, and 214–216 (IWN) contribute to the ATP site. L-alanine-binding residues include N216 and D239. G243 contacts ATP. S399 and S555 each carry phosphoserine. 4 residues coordinate Zn(2+): H605, H609, C723, and H727. Positions 750-763 (RRIVAVTGAEAQKA) match the Nuclear localization signal motif. K876 is modified (N6-acetyllysine). The residue at position 943 (K943) is an N6,N6,N6-trimethyllysine; alternate. K943 is subject to N6,N6-dimethyllysine; alternate. K943 is modified (N6-methyllysine; alternate).

This sequence belongs to the class-II aminoacyl-tRNA synthetase family. Monomer. Interacts with ANKRD16; the interaction is direct. The cofactor is Zn(2+). Post-translationally, ISGylated. In terms of processing, methylation at 'Lys-943' by METTL21C.

It is found in the cytoplasm. It localises to the nucleus. It catalyses the reaction tRNA(Ala) + L-alanine + ATP = L-alanyl-tRNA(Ala) + AMP + diphosphate. It carries out the reaction (S)-lactate + ATP + H(+) = (S)-lactoyl-AMP + diphosphate. The catalysed reaction is (S)-lactoyl-AMP + L-lysyl-[protein] = N(6)-[(S)-lactoyl]-L-lysyl-[protein] + AMP + 2 H(+). With respect to regulation, the protein lactyltransferase activity is inhibited by beta-alanine. Catalyzes the attachment of alanine to tRNA(Ala) in a two-step reaction: alanine is first activated by ATP to form Ala-AMP and then transferred to the acceptor end of tRNA(Ala). Also edits incorrectly charged tRNA(Ala) via its editing domain. In presence of high levels of lactate, also acts as a protein lactyltransferase that mediates lactylation of lysine residues in target proteins, such as TEAD1, TP53/p53 and YAP1. Protein lactylation takes place in a two-step reaction: lactate is first activated by ATP to form lactate-AMP and then transferred to lysine residues of target proteins. Acts as an inhibitor of TP53/p53 activity by catalyzing lactylation of TP53/p53. Acts as a positive regulator of the Hippo pathway by mediating lactylation of TEAD1 and YAP1. This is Alanine--tRNA ligase, cytoplasmic from Homo sapiens (Human).